Here is a 108-residue protein sequence, read N- to C-terminus: Mitochondrial pyruvate carrier 3 (108 aa).

Transmembrane regions (helical) follow at residues 19 to 35 (IHFW…IANI), 51 to 67 (IVIT…STVI), and 74 to 90 (LFSV…YQLT).

The protein belongs to the mitochondrial pyruvate carrier (MPC) (TC 2.A.105) family. Abundant in leaf and particularly in the guard cells.

It localises to the mitochondrion. The protein localises to the mitochondrion inner membrane. Its function is as follows. Mediates the uptake of pyruvate into mitochondria. Negatively regulates ABA-induced guard cell signaling and mediates drought stress responses. The protein is Mitochondrial pyruvate carrier 3 of Arabidopsis thaliana (Mouse-ear cress).